The following is a 146-amino-acid chain: MIALIQRVSEARVVVDGAVTGEISNGLLVLLGVERDDDVAKADKLAHRVAGYRVFSDADGKMNLNVQQVNGSILVVSQFTLAADTRKGMRASFAERNADPAVAEALYEHFIAQIAGKEIPVASGRFAADMQVSLVNDGPVTFWLQV.

A Gly-cisPro motif, important for rejection of L-amino acids motif is present at residues 138-139 (GP).

This sequence belongs to the DTD family. Homodimer.

It is found in the cytoplasm. It catalyses the reaction glycyl-tRNA(Ala) + H2O = tRNA(Ala) + glycine + H(+). It carries out the reaction a D-aminoacyl-tRNA + H2O = a tRNA + a D-alpha-amino acid + H(+). Its function is as follows. An aminoacyl-tRNA editing enzyme that deacylates mischarged D-aminoacyl-tRNAs. Also deacylates mischarged glycyl-tRNA(Ala), protecting cells against glycine mischarging by AlaRS. Acts via tRNA-based rather than protein-based catalysis; rejects L-amino acids rather than detecting D-amino acids in the active site. By recycling D-aminoacyl-tRNA to D-amino acids and free tRNA molecules, this enzyme counteracts the toxicity associated with the formation of D-aminoacyl-tRNA entities in vivo and helps enforce protein L-homochirality. The polypeptide is D-aminoacyl-tRNA deacylase (Tolumonas auensis (strain DSM 9187 / NBRC 110442 / TA 4)).